A 69-amino-acid chain; its full sequence is Large ribosomal subunit protein uL29 (69 aa).

This sequence belongs to the universal ribosomal protein uL29 family.

This chain is Large ribosomal subunit protein uL29, found in Natronomonas pharaonis (strain ATCC 35678 / DSM 2160 / CIP 103997 / JCM 8858 / NBRC 14720 / NCIMB 2260 / Gabara) (Halobacterium pharaonis).